The following is a 189-amino-acid chain: Penicillin-binding protein activator LpoB (189 aa).

Residues 1 to 16 form the signal peptide; it reads MRRILFVALSVMFLAG. Residue C17 is the site of N-palmitoyl cysteine attachment. C17 carries the S-diacylglycerol cysteine lipid modification. The segment at 18–52 is disordered; it reads PSLPPEQPEPPTPVVPVTPSEKPTPPSEKVPEPPK. Residues 19–45 are compositionally biased toward pro residues; sequence SLPPEQPEPPTPVVPVTPSEKPTPPSE.

It belongs to the LpoB family. As to quaternary structure, interacts with PBP1b.

Its subcellular location is the cell outer membrane. In terms of biological role, regulator of peptidoglycan synthesis that is essential for the function of penicillin-binding protein 1B (PBP1b). The polypeptide is Penicillin-binding protein activator LpoB (Photorhabdus laumondii subsp. laumondii (strain DSM 15139 / CIP 105565 / TT01) (Photorhabdus luminescens subsp. laumondii)).